Consider the following 307-residue polypeptide: Protease HtpX homolog (307 aa).

Transmembrane regions (helical) follow at residues 10–30 (VITI…AYGL) and 40–60 (ISII…QWLV). His144 provides a ligand contact to Zn(2+). Glu145 is an active-site residue. Zn(2+) is bound at residue His148. The next 2 helical transmembrane spans lie at 156 to 176 (LLLA…SMIF) and 187 to 207 (FFLV…MILG). Glu213 contributes to the Zn(2+) binding site.

The protein belongs to the peptidase M48B family. Zn(2+) is required as a cofactor.

Its subcellular location is the cell membrane. The polypeptide is Protease HtpX homolog (Picrophilus torridus (strain ATCC 700027 / DSM 9790 / JCM 10055 / NBRC 100828 / KAW 2/3)).